We begin with the raw amino-acid sequence, 443 residues long: Protein SCAR (443 aa).

The interaction with brk1 and abiA stretch occupies residues 1–96; sequence MVLITRYLPS…DYHRNTSIDT (96 aa). A coiled-coil region spans residues 166–201; the sequence is VAEQQKLHEEARQRKRERREARLKKKGEKNEVEVKK. 2 disordered regions span residues 176-197 and 220-386; these read ARQR…KNEV and INIE…RSDL. Over residues 178–192 the composition is skewed to basic residues; sequence QRKRERREARLKKKG. Polar residues predominate over residues 221 to 252; the sequence is NIESPHTSSPQIQHQSNNTATPQHTTQHFGTN. Composition is skewed to low complexity over residues 263 to 277 and 285 to 305; these read SQSS…INSY and NTST…TGFN. Residues 306-323 show a composition bias toward pro residues; it reads TPPPPMSNNNNMPPPPPM. Residues 324–338 are compositionally biased toward polar residues; that stretch reads QQNGGAANNRLSVHN. A compositionally biased stretch (pro residues) spans 346–365; it reads PAPPPPPPPPSAPAPPPPPM. Positions 382-399 constitute a WH2 domain; it reads ARSDLLSSIMQGMALKPA.

Belongs to the SCAR/WAVE family. In terms of assembly, part of a Scar/WAVE complex containing brk1, scrA, abiA, pirA and napA. Interacts with brk1 and abiA.

The protein resides in the cytoplasm. It localises to the cytoskeleton. The protein localises to the cell projection. It is found in the pseudopodium tip. Its subcellular location is the filopodium tip. In terms of biological role, involved in regulation of actin and microtubule organization. Regulates phagocytosis and macropinocytosis. This is Protein SCAR (scrA) from Dictyostelium discoideum (Social amoeba).